We begin with the raw amino-acid sequence, 383 residues long: S-adenosylmethionine synthase (383 aa).

H15 serves as a coordination point for ATP. D17 is a Mg(2+) binding site. E43 is a binding site for K(+). E56 and Q99 together coordinate L-methionine. The interval 99 to 109 (QSPDINQGVDR) is flexible loop. ATP contacts are provided by residues 164-166 (DAK), 230-231 (RF), D239, 245-246 (RK), A262, and K266. Position 239 (D239) interacts with L-methionine. K270 contacts L-methionine.

This sequence belongs to the AdoMet synthase family. As to quaternary structure, homotetramer; dimer of dimers. Mg(2+) serves as cofactor. It depends on K(+) as a cofactor.

It is found in the cytoplasm. The catalysed reaction is L-methionine + ATP + H2O = S-adenosyl-L-methionine + phosphate + diphosphate. Its pathway is amino-acid biosynthesis; S-adenosyl-L-methionine biosynthesis; S-adenosyl-L-methionine from L-methionine: step 1/1. In terms of biological role, catalyzes the formation of S-adenosylmethionine (AdoMet) from methionine and ATP. The overall synthetic reaction is composed of two sequential steps, AdoMet formation and the subsequent tripolyphosphate hydrolysis which occurs prior to release of AdoMet from the enzyme. The sequence is that of S-adenosylmethionine synthase from Shewanella baltica (strain OS155 / ATCC BAA-1091).